Reading from the N-terminus, the 320-residue chain is NAC domain-containing protein 20 (320 aa).

An NAC domain is found at 14 to 170; it reads LPPGFRFHPT…DWAVCRIFHK (157 aa). The DNA-binding element occupies 114-176; it reads IGMKKTLVFY…IFHKSSGIKK (63 aa).

Forms homodimers. Forms heterodimers with NAC26. Expressed in developing seeds. Expressed in developing endosperm.

Its subcellular location is the nucleus. It localises to the endoplasmic reticulum. Transcription factor that acts redundantly with NAC26 to regulate the expression of genes involved in the biosynthesis of starch and storage proteins in grain. Directly binds to the promoters of starch synthase 1 (SS1), pullulanase (PUL), glutelin A1 (GLUA1), glutelins B4 and B5 (GLUB4 and GLUB5), alpha-globulin and 16 kDa prolamin, and activates their expression. The protein is NAC domain-containing protein 20 of Oryza sativa subsp. japonica (Rice).